A 122-amino-acid polypeptide reads, in one-letter code: Large ribosomal subunit protein uL14c (122 aa).

This sequence belongs to the universal ribosomal protein uL14 family. As to quaternary structure, part of the 50S ribosomal subunit.

It is found in the plastid. It localises to the chloroplast. Its function is as follows. Binds to 23S rRNA. The protein is Large ribosomal subunit protein uL14c of Nandina domestica (Heavenly bamboo).